We begin with the raw amino-acid sequence, 199 residues long: MNCVCRLVLVVLSLWPDTAVAPGPPPGPPRVSPDPRAELDSTVLLTRSLLADTRQLAAQLRDKFPADGDHNLDSLPTLAMSAGALGALQLPGVLTRLRADLLSYLRHVQWLRRAGGSSLKTLEPELGTLQARLDRLLRRLQLLMSRLALPQPPPDPPAPPLAPPSSAWGGIRAAHAILGGLHLTLDWAVRGLLLLKTRL.

Positions 1–21 are cleaved as a signal peptide; that stretch reads MNCVCRLVLVVLSLWPDTAVA. Residues 182-190 form an important for interaction with IL11RA and for the stimulation of cell proliferation region; it reads HLTLDWAVR.

Belongs to the IL-6 superfamily. Interacts with IL11RA to associate with IL6ST, giving rise to a multimeric signaling complex.

It localises to the secreted. Cytokine that stimulates the proliferation of hematopoietic stem cells and megakaryocyte progenitor cells and induces megakaryocyte maturation resulting in increased platelet production. Also promotes the proliferation of hepatocytes in response to liver damage. Binding to its receptor formed by IL6ST and IL11RA activates a signaling cascade that promotes cell proliferation. Signaling leads to the activation of intracellular protein kinases and the phosphorylation of STAT3. The interaction with the membrane-bound IL11RA and IL6ST stimulates 'classic signaling', whereas the binding of IL11 and soluble IL11RA to IL6ST stimulates 'trans-signaling'. This Homo sapiens (Human) protein is Interleukin-11.